An 801-amino-acid chain; its full sequence is Na(+)/H(+) antiporter subunit A1 (801 aa).

A run of 21 helical transmembrane segments spans residues 4-25, 30-49, 79-101, 108-127, 131-153, 166-188, 208-230, 243-265, 270-289, 302-324, 339-361, 373-395, 429-451, 472-494, 526-548, 589-611, 621-641, 646-668, 672-694, 707-729, and 767-784; these read LHIA…YRFF, LGWF…LTLI, LGLL…SIGY, LGNF…GVVL, VIIL…SFWR, LIIT…IPTQ, FIFA…PFYI, SAYL…MTPI, QGWV…WASL, AFST…ISYH, AAIF…TGAV, LGGL…LSMA, YLFP…KFIM, ILML…FPGI, AFLS…SYWV, NNLV…SVPF, IRIF…LILF, LFSI…FFKA, ALTQ…YHLP, LTNA…IAYG, and LFES…YTMI.

Belongs to the CPA3 antiporters (TC 2.A.63) subunit A family. May form a heterooligomeric complex that consists of seven subunits: mnhA1, mnhB1, mnhC1, mnhD1, mnhE1, mnhF1 and mnhG1.

The protein localises to the cell membrane. Na(+) extrusion is completely inhibited by the H(+) conductor carbonyl cyanide m-chlorophenylhydrazone (CCCP). Mnh complex is a Na(+)/H(+) antiporter involved in Na(+) excretion. The chain is Na(+)/H(+) antiporter subunit A1 (mnhA1) from Staphylococcus aureus (strain MSSA476).